The following is a 428-amino-acid chain: Mitochondrial distribution and morphology protein 12 (428 aa).

The SMP-LTD domain maps to Met1 to Asn387. 2 disordered regions span residues Val75–Leu168 and Asn387–Glu428. Residues Asn81 to Asn96 are compositionally biased toward basic and acidic residues. Residues Leu106–Asp133 are compositionally biased toward acidic residues. Positions Leu146 to Ala161 are enriched in polar residues. Acidic residues predominate over residues Asn387–Asp403. The span at Asn412 to Glu428 shows a compositional bias: basic and acidic residues.

It belongs to the MDM12 family. As to quaternary structure, component of the ER-mitochondria encounter structure (ERMES) or MDM complex, composed of MMM1, MDM10, MDM12 and MDM34. An MMM1 homodimer associates with one molecule of MDM12 on each side in a pairwise head-to-tail manner, and the SMP-LTD domains of MMM1 and MDM12 generate a continuous hydrophobic tunnel for phospholipid trafficking.

The protein resides in the mitochondrion outer membrane. It localises to the endoplasmic reticulum membrane. Functionally, component of the ERMES/MDM complex, which serves as a molecular tether to connect the endoplasmic reticulum (ER) and mitochondria. Components of this complex are involved in the control of mitochondrial shape and protein biogenesis, and function in nonvesicular lipid trafficking between the ER and mitochondria. MDM12 is required for the interaction of the ER-resident membrane protein MMM1 and the outer mitochondrial membrane-resident beta-barrel protein MDM10. The MDM12-MMM1 subcomplex functions in the major beta-barrel assembly pathway that is responsible for biogenesis of all mitochondrial outer membrane beta-barrel proteins, and acts in a late step after the SAM complex. The MDM10-MDM12-MMM1 subcomplex further acts in the TOM40-specific pathway after the action of the MDM12-MMM1 complex. Essential for establishing and maintaining the structure of mitochondria and maintenance of mtDNA nucleoids. The chain is Mitochondrial distribution and morphology protein 12 from Candida albicans (strain SC5314 / ATCC MYA-2876) (Yeast).